The chain runs to 188 residues: Calcium load-activated calcium channel (188 aa).

The Lumenal segment spans residues 1-4 (MSTM). Residues 5-32 (FADTLLIVFISVCTALLAEGITWVLVYR) form a helical membrane-spanning segment. Positions 32–89 (RTDKYKRLKAEVEKQSKKLEKKKETITESAGRQQKKKIERQEEKLKNNNRDLSMVRMK) form a coiled coil. The Cytoplasmic segment spans residues 33 to 86 (TDKYKRLKAEVEKQSKKLEKKKETITESAGRQQKKKIERQEEKLKNNNRDLSMV). Residue S60 is modified to Phosphoserine. Residues 87-106 (RMKSMFAIGFCFTALMGMFN) form a helical membrane-spanning segment. Residues 107–120 (SIFDGRVVAKLPFT) lie on the Lumenal side of the membrane. An intramembrane segment occupies 121-130 (PLSYIQGLSH). At 131 to 140 (RNLLGDDTTD) the chain is on the lumenal side. A helical transmembrane segment spans residues 141 to 162 (CSFIFLYILCTMSIRQNIQKIL). Over 163 to 188 (GLAPSRAATKQAGGFLGPPPPSGKFS) the chain is Cytoplasmic. S188 carries the post-translational modification Phosphoserine.

This sequence belongs to the TMCO1 family. As to quaternary structure, homodimer and homotetramer. Homodimer under resting conditions; forms homotetramers following ER calcium overload. Component of the GET- and EMC-like (GEL) complex, composed of RAB5IF/OPTI and TMCO1. The GEL complex is part of the multi-pass translocon (MPT) complex, composed of three subcomplexes, the GEL complex (composed of RAB5IF/OPTI and TMCO1), the BOS complex (composed of NCLN/Nicalin, NOMO1 and TMEM147) and the PAT complex (composed of WDR83OS/Asterix and CCDC47). The MPT complex associates with the SEC61 complex.

The protein localises to the endoplasmic reticulum membrane. Its subcellular location is the golgi apparatus membrane. It is found in the mitochondrion membrane. The catalysed reaction is Ca(2+)(in) = Ca(2+)(out). Its function is as follows. Endoplasmic reticulum (ER) calcium-selective channel preventing intracellular Ca2(+) stores from overfilling and maintaining calcium homeostasis in the ER. In response to endoplasmic reticulum (ER) Ca2(+) overloading, assembles into a homotetramer, forming a functional calcium-selective channel facilitating Ca2(+) release. Mediates ER Ca2(+) homeostasis in osteoblasts and plays a key role in bone formation, via the CaMKII-HDAC4-RUNX2 signaling axis. Component of the multi-pass translocon (MPT) complex that mediates insertion of multi-pass membrane proteins into the lipid bilayer of membranes. The MPT complex takes over after the SEC61 complex: following membrane insertion of the first few transmembrane segments of proteins by the SEC61 complex, the MPT complex occludes the lateral gate of the SEC61 complex to promote insertion of subsequent transmembrane regions. Within the MPT complex, the GEL subcomplex may mediate insertion of transmembrane regions into the membrane. In Bos taurus (Bovine), this protein is Calcium load-activated calcium channel.